We begin with the raw amino-acid sequence, 1959 residues long: Zinc finger protein hangover (1959 aa).

A ZAD domain is found at 79–155 (NCCRLCIAPQ…FSSQAKQRQW (77 aa)). Zn(2+) contacts are provided by Cys-81, Cys-84, Cys-128, and Cys-131. The interval 178–208 (GFFDQHLHQQQQHHQHLENELEAEKEKATPT) is disordered. Residues 192 to 205 (QHLENELEAEKEKA) are compositionally biased toward basic and acidic residues. Ser-228 carries the phosphoserine modification. Position 246 is a phosphothreonine (Thr-246). The C2H2-type 1 zinc-finger motif lies at 318–341 (ASCRACSLQFSTRANARRHERNLH). The segment at 447-469 (MTCRCCNKYFSTYKNFMAHVRKK) adopts a C2H2-type 2; degenerate zinc-finger fold. The segment at 581–604 (YECKLCPKGFRTKHEFRTHVYDKH) adopts a C2H2-type 3 zinc-finger fold. The tract at residues 674 to 762 (AVSDNASTTG…ANRDASAPKS (89 aa)) is disordered. The span at 677–693 (DNASTTGSGMARSNSME) shows a compositional bias: polar residues. Ser-680 carries the post-translational modification Phosphoserine. 2 stretches are compositionally biased toward low complexity: residues 716-727 (SSSAAPPLTSTP) and 741-759 (TSAS…DASA). 2 consecutive C2H2-type zinc fingers follow at residues 770–793 (QVCP…ESKH) and 801–824 (YKCV…INVH). Residues Ser-832, Ser-894, Ser-895, Ser-898, and Ser-899 each carry the phosphoserine modification. The C2H2-type 6 zinc-finger motif lies at 908 to 930 (KECPICNAVFSNNIGLSNHMRSH). Residues 960-991 (TDSELGVGGTMSESAPATPANVPPAMANQTPQ) are disordered. 5 consecutive C2H2-type zinc fingers follow at residues 1011–1034 (MRCR…LTDH), 1042–1065 (IKCK…FKVH), 1078–1101 (FECD…RSVH), 1154–1176 (YQCK…INSH), and 1184–1207 (YSCK…YKKH). Polar residues predominate over residues 1233 to 1253 (TPTCNRKPITSTGAHQQQDGQ). The disordered stretch occupies residues 1233–1301 (TPTCNRKPIT…GNGTTVGVAS (69 aa)). Over residues 1255–1267 (HSHHTAKRTIFRH) the composition is skewed to basic residues. Positions 1271 to 1283 (DDDDEEDDDEQQQ) are enriched in acidic residues. 2 consecutive C2H2-type zinc fingers follow at residues 1318-1340 (VACT…IQKH) and 1375-1397 (YACD…RKWH). Residues 1445 to 1467 (QQSLNNSCNSSMNHNNNSSSNRS) are compositionally biased toward low complexity. A disordered region spans residues 1445–1471 (QQSLNNSCNSSMNHNNNSSSNRSKSMK). C2H2-type zinc fingers lie at residues 1476 to 1499 (LKCE…YELH) and 1552 to 1574 (WGCD…INNH). The segment at 1627–1865 (AAGATTTDKL…STGERRKKAV (239 aa)) is disordered. Positions 1639–1695 (PDEEDSDDLDEDSSGDDDDSSGTGDDDDDDDSDDDEDGEGEDEDEEGDGGEGEDEEG) are enriched in acidic residues. The segment covering 1697-1715 (QPPAQLLPQQQHKTDLNLN) has biased composition (low complexity). 2 stretches are compositionally biased toward acidic residues: residues 1716 to 1758 (QDDD…EEPE) and 1782 to 1829 (SDDE…EDEP). Positions 1833 to 1851 (STASFSESESSTTTTSNSH) are enriched in low complexity. The C2H2-type 16 zinc finger occupies 1873-1895 (FTCDLCQLCFDSQELLQSHIKSH). Positions 1933–1959 (PDSKSAVLANNNNSKTSSKTVAAGATN) are disordered. Low complexity predominate over residues 1942–1952 (NNNNSKTSSKT).

Expressed ubiquitously in the nervous system, in neurons not glia.

It localises to the nucleus. In terms of biological role, required for normal development of ethanol tolerance. Relies on two distinct molecular pathways: a cellular stress pathway defined by hang, and a parallel pathway requiring octopamine. The chain is Zinc finger protein hangover (hang) from Drosophila melanogaster (Fruit fly).